The sequence spans 385 residues: tRNA pseudouridine synthase D (385 aa).

Catalysis depends on Asp-65, which acts as the Nucleophile. A TRUD domain is found at 143–345 (GCENYFGEQR…SDGVRKAFFK (203 aa)).

The protein belongs to the pseudouridine synthase TruD family.

It catalyses the reaction uridine(13) in tRNA = pseudouridine(13) in tRNA. Responsible for synthesis of pseudouridine from uracil-13 in transfer RNAs. The sequence is that of tRNA pseudouridine synthase D from Aquifex aeolicus (strain VF5).